The chain runs to 366 residues: Chorismate synthase (366 aa).

2 residues coordinate NADP(+): Arg-48 and Arg-54. FMN-binding positions include 125 to 127, 237 to 238, Gly-277, 292 to 296, and Arg-318; these read RSS, NA, and KPTSS.

Belongs to the chorismate synthase family. In terms of assembly, homotetramer. FMNH2 serves as cofactor.

It carries out the reaction 5-O-(1-carboxyvinyl)-3-phosphoshikimate = chorismate + phosphate. It functions in the pathway metabolic intermediate biosynthesis; chorismate biosynthesis; chorismate from D-erythrose 4-phosphate and phosphoenolpyruvate: step 7/7. Catalyzes the anti-1,4-elimination of the C-3 phosphate and the C-6 proR hydrogen from 5-enolpyruvylshikimate-3-phosphate (EPSP) to yield chorismate, which is the branch point compound that serves as the starting substrate for the three terminal pathways of aromatic amino acid biosynthesis. This reaction introduces a second double bond into the aromatic ring system. The chain is Chorismate synthase from Acidovorax sp. (strain JS42).